The sequence spans 180 residues: NAD(P)H-quinone oxidoreductase subunit 6, chloroplastic (180 aa).

5 helical membrane-spanning segments follow: residues 10-30, 32-52, 57-77, 95-115, and 153-173; these read ILLV…VLLT, IIYS…LYIL, FVAA…IVFA, VGDG…ITII, and FLPF…AITI.

This sequence belongs to the complex I subunit 6 family. NDH is composed of at least 16 different subunits, 5 of which are encoded in the nucleus.

It localises to the plastid. Its subcellular location is the chloroplast thylakoid membrane. It catalyses the reaction a plastoquinone + NADH + (n+1) H(+)(in) = a plastoquinol + NAD(+) + n H(+)(out). It carries out the reaction a plastoquinone + NADPH + (n+1) H(+)(in) = a plastoquinol + NADP(+) + n H(+)(out). Its function is as follows. NDH shuttles electrons from NAD(P)H:plastoquinone, via FMN and iron-sulfur (Fe-S) centers, to quinones in the photosynthetic chain and possibly in a chloroplast respiratory chain. The immediate electron acceptor for the enzyme in this species is believed to be plastoquinone. Couples the redox reaction to proton translocation, and thus conserves the redox energy in a proton gradient. The polypeptide is NAD(P)H-quinone oxidoreductase subunit 6, chloroplastic (ndhG) (Cycas taitungensis (Prince sago)).